Consider the following 210-residue polypeptide: Thiamine-phosphate synthase (210 aa).

4-amino-2-methyl-5-(diphosphooxymethyl)pyrimidine-binding positions include 43 to 47 (QLREK) and N75. Residues D76 and D95 each contribute to the Mg(2+) site. S114 is a binding site for 4-amino-2-methyl-5-(diphosphooxymethyl)pyrimidine. 140–142 (TST) provides a ligand contact to 2-[(2R,5Z)-2-carboxy-4-methylthiazol-5(2H)-ylidene]ethyl phosphate. K143 provides a ligand contact to 4-amino-2-methyl-5-(diphosphooxymethyl)pyrimidine. 2-[(2R,5Z)-2-carboxy-4-methylthiazol-5(2H)-ylidene]ethyl phosphate is bound by residues G170 and 190-191 (IS).

Belongs to the thiamine-phosphate synthase family. Mg(2+) is required as a cofactor.

The enzyme catalyses 2-[(2R,5Z)-2-carboxy-4-methylthiazol-5(2H)-ylidene]ethyl phosphate + 4-amino-2-methyl-5-(diphosphooxymethyl)pyrimidine + 2 H(+) = thiamine phosphate + CO2 + diphosphate. It catalyses the reaction 2-(2-carboxy-4-methylthiazol-5-yl)ethyl phosphate + 4-amino-2-methyl-5-(diphosphooxymethyl)pyrimidine + 2 H(+) = thiamine phosphate + CO2 + diphosphate. It carries out the reaction 4-methyl-5-(2-phosphooxyethyl)-thiazole + 4-amino-2-methyl-5-(diphosphooxymethyl)pyrimidine + H(+) = thiamine phosphate + diphosphate. It participates in cofactor biosynthesis; thiamine diphosphate biosynthesis; thiamine phosphate from 4-amino-2-methyl-5-diphosphomethylpyrimidine and 4-methyl-5-(2-phosphoethyl)-thiazole: step 1/1. Functionally, condenses 4-methyl-5-(beta-hydroxyethyl)thiazole monophosphate (THZ-P) and 2-methyl-4-amino-5-hydroxymethyl pyrimidine pyrophosphate (HMP-PP) to form thiamine monophosphate (TMP). This chain is Thiamine-phosphate synthase, found in Clostridioides difficile (strain 630) (Peptoclostridium difficile).